A 432-amino-acid polypeptide reads, in one-letter code: Adenylosuccinate synthetase (432 aa).

GTP-binding positions include 13 to 19 and 41 to 43; these read GDEGKGK and GHT. Residue D14 is the Proton acceptor of the active site. Mg(2+) contacts are provided by D14 and G41. Residues 14–17, 39–42, T130, R144, Q225, T240, and R304 contribute to the IMP site; these read DEGK and NAGH. H42 functions as the Proton donor in the catalytic mechanism. 300–306 is a substrate binding site; the sequence is ATTGRRR. Residues R306, 332-334, and 415-417 contribute to the GTP site; these read KLD and STG.

Belongs to the adenylosuccinate synthetase family. In terms of assembly, homodimer. The cofactor is Mg(2+).

The protein resides in the cytoplasm. The enzyme catalyses IMP + L-aspartate + GTP = N(6)-(1,2-dicarboxyethyl)-AMP + GDP + phosphate + 2 H(+). Its pathway is purine metabolism; AMP biosynthesis via de novo pathway; AMP from IMP: step 1/2. Plays an important role in the de novo pathway of purine nucleotide biosynthesis. Catalyzes the first committed step in the biosynthesis of AMP from IMP. This Shigella sonnei (strain Ss046) protein is Adenylosuccinate synthetase.